A 167-amino-acid polypeptide reads, in one-letter code: Ion-translocating oxidoreductase complex subunit B (167 aa).

Residues 1–22 are hydrophobic; the sequence is MITLIIFSFLSFLLGIILSFTA. The 4Fe-4S domain occupies 28–87; that stretch reads QEDPIVEIVNELLPQSQCAQCGYSGCYPYAKAIVENSEKINKCIPGGTDLISAISSVLSI. Residues C45, C48, C53, C70, C113, C116, C119, C123, C143, C146, C149, and C153 each coordinate [4Fe-4S] cluster. 4Fe-4S ferredoxin-type domains are found at residues 104 to 133 and 134 to 163; these read NTVLINESNCVGCSKCASFCPVDAIVGAPN and FIHTVLQEFCTGCNICLLHCPTNCIEIKKE.

The protein belongs to the 4Fe4S bacterial-type ferredoxin family. RnfB subfamily. As to quaternary structure, the complex is composed of six subunits: RnfA, RnfB, RnfC, RnfD, RnfE and RnfG. [4Fe-4S] cluster is required as a cofactor.

It is found in the cell inner membrane. In terms of biological role, part of a membrane-bound complex that couples electron transfer with translocation of ions across the membrane. The protein is Ion-translocating oxidoreductase complex subunit B of Buchnera aphidicola subsp. Acyrthosiphon pisum (strain Tuc7).